The sequence spans 82 residues: Apovitellenin-1 (82 aa).

The protein belongs to the apovitellenin family. Monomer. In terms of tissue distribution, found in egg yolk and in plasma.

In terms of biological role, protein component of the very low density lipoprotein (VLDL) of egg-laying females. Potent lipoprotein lipase inhibitor, preventing the loss of triglycerides from VLDL on their way from the liver to the growing oocytes. The protein is Apovitellenin-1 of Anas platyrhynchos (Mallard).